The chain runs to 585 residues: Aspartate--tRNA ligase (585 aa).

An L-aspartate-binding site is contributed by Glu-171. The aspartate stretch occupies residues Gln-195–Lys-198. An L-aspartate-binding site is contributed by Arg-217. Residues Arg-217–Glu-219 and Gln-226 each bind ATP. An L-aspartate-binding site is contributed by His-448. Glu-482 contributes to the ATP binding site. Position 489 (Arg-489) interacts with L-aspartate. Residue Gly-534–Arg-537 participates in ATP binding.

This sequence belongs to the class-II aminoacyl-tRNA synthetase family. Type 1 subfamily. In terms of assembly, homodimer.

It localises to the cytoplasm. The enzyme catalyses tRNA(Asp) + L-aspartate + ATP = L-aspartyl-tRNA(Asp) + AMP + diphosphate. Functionally, catalyzes the attachment of L-aspartate to tRNA(Asp) in a two-step reaction: L-aspartate is first activated by ATP to form Asp-AMP and then transferred to the acceptor end of tRNA(Asp). The chain is Aspartate--tRNA ligase from Histophilus somni (strain 129Pt) (Haemophilus somnus).